Reading from the N-terminus, the 510-residue chain is uncharacterized protein (510 aa).

Helical transmembrane passes span 17–37, 56–76, 111–131, 148–168, 180–200, 223–243, 261–281, 300–320, 355–375, 382–402, 434–454, and 472–492; these read LKLGIISLGLGGLYSIILVVL, LIIHVNLSILIWLLSITASVW, VLYIYPKLAFFATLLIAISPL, IVFILGLSLFGVTLLLYAINI, LVNVTVFSTIIMFILSFVCFG, LLFWSGGHLLQFIYTQILIFI, FYLFILYLNFVFSILILFGHI, YLGGIAPILCLVGMVVELVLM, IIKTILLCSITLFLLGGLIAI, LVIPAHYHGSIVGISIACMGY, AIYLLTFGQILHILGLAFSGI, and LLMGMMGIGGLIAIVGGLMFV.

The protein to A.aeolicus AQ_155.

It localises to the cell membrane. This is an uncharacterized protein from Rickettsia prowazekii (strain Madrid E).